Consider the following 358-residue polypeptide: Uptake hydrogenase small subunit (358 aa).

The segment at residues methionine 1–alanine 45 is a signal peptide (tat-type signal). [4Fe-4S] cluster contacts are provided by cysteine 62, cysteine 65, cysteine 160, cysteine 194, histidine 232, cysteine 235, cysteine 260, and cysteine 266. Cysteine 275, cysteine 294, and cysteine 297 together coordinate [3Fe-4S] cluster.

The protein belongs to the [NiFe]/[NiFeSe] hydrogenase small subunit family. As to quaternary structure, heterodimer of a large and a small subunit. Requires [4Fe-4S] cluster as cofactor. [3Fe-4S] cluster is required as a cofactor. Predicted to be exported by the Tat system. The position of the signal peptide cleavage has been experimentally proven.

Its subcellular location is the cell membrane. The catalysed reaction is H2 + A = AH2. Its function is as follows. This enzyme recycles the H(2) produced by nitrogenase to increase the production of ATP and to protect nitrogenase against inhibition or damage by O(2) under carbon- or phosphate-limited conditions. The protein is Uptake hydrogenase small subunit (hoxK) of Azotobacter vinelandii.